The chain runs to 55 residues: Large ribosomal subunit protein bL33 (55 aa).

Belongs to the bacterial ribosomal protein bL33 family.

In Yersinia enterocolitica serotype O:8 / biotype 1B (strain NCTC 13174 / 8081), this protein is Large ribosomal subunit protein bL33.